A 1380-amino-acid chain; its full sequence is Tripeptidyl-peptidase 2 (1380 aa).

Residues 110 to 619 form the Peptidase S8 domain; it reads STFIASLMPK…QGLMQVDKAY (510 aa). Catalysis depends on charge relay system residues aspartate 145, histidine 372, and serine 558. A disordered region spans residues 1099 to 1143; that stretch reads DEKEGKNPKDNPVSYPISYVVPPNKPEEDKKAASAPTCSKSVSER. A compositionally biased stretch (low complexity) spans 1110 to 1120; that stretch reads PVSYPISYVVP. 2 coiled-coil regions span residues 1152–1181 and 1238–1300; these read KIKFLGNLKQETEEERSEWRKLCTCLKSEY and EDDE…ELTK.

The protein belongs to the peptidase S8 family. In terms of assembly, assembles into a large oligomeric complex containing two related proteins 153 and 142 kDa that are derived from the single TPP2 gene. The 142 kDa form mainly differs from the 153 kDa form by a truncation at the C-terminal end.

It carries out the reaction Release of an N-terminal tripeptide from a polypeptide.. Its activity is regulated as follows. Inhibited by alanine-alanine-phenylalanine-chloromethylketone, butabindide and phenylmethanesulfonyl fluoride (PMSF), but not by leupeptin, N-ethylmaleimide, EDTA, MG132 and lactacystin. Its function is as follows. Serine protease of the proteasome pathway that may function with the 20S proteasome to degrade oxidized proteins generated by environmental stress. The protein is Tripeptidyl-peptidase 2 (TPP2) of Arabidopsis thaliana (Mouse-ear cress).